The following is a 1434-amino-acid chain: DNA-directed RNA polymerase subunit beta (1434 aa).

Belongs to the RNA polymerase beta chain family. In terms of assembly, the RNAP catalytic core consists of 2 alpha, 1 beta, 1 beta' and 1 omega subunit. When a sigma factor is associated with the core the holoenzyme is formed, which can initiate transcription.

It catalyses the reaction RNA(n) + a ribonucleoside 5'-triphosphate = RNA(n+1) + diphosphate. Its function is as follows. DNA-dependent RNA polymerase catalyzes the transcription of DNA into RNA using the four ribonucleoside triphosphates as substrates. The chain is DNA-directed RNA polymerase subunit beta from Ureaplasma parvum serovar 3 (strain ATCC 700970).